An 87-amino-acid chain; its full sequence is RNA-binding protein Hfq (87 aa).

The Sm domain maps to 9–68; it reads DPFLNALRRERIPVSIYLVNGIKLQGQIESFDQFVILLKNTVNQMVYKHAISTVVPARPV. The segment at 65 to 87 is disordered; sequence ARPVSHHSGDRPQGDRPQEKSED. Residues 71-87 are compositionally biased toward basic and acidic residues; it reads HSGDRPQGDRPQEKSED.

This sequence belongs to the Hfq family. As to quaternary structure, homohexamer.

In terms of biological role, RNA chaperone that binds small regulatory RNA (sRNAs) and mRNAs to facilitate mRNA translational regulation in response to envelope stress, environmental stress and changes in metabolite concentrations. Also binds with high specificity to tRNAs. In Vibrio parahaemolyticus serotype O3:K6 (strain RIMD 2210633), this protein is RNA-binding protein Hfq.